The following is a 431-amino-acid chain: Enolase (431 aa).

Q166 is a binding site for (2R)-2-phosphoglycerate. The active-site Proton donor is the E208. Residues D245, E288, and D315 each contribute to the Mg(2+) site. 4 residues coordinate (2R)-2-phosphoglycerate: K340, R369, S370, and K391. The active-site Proton acceptor is K340.

The protein belongs to the enolase family. Mg(2+) is required as a cofactor.

The protein localises to the cytoplasm. The protein resides in the secreted. Its subcellular location is the cell surface. The enzyme catalyses (2R)-2-phosphoglycerate = phosphoenolpyruvate + H2O. The protein operates within carbohydrate degradation; glycolysis; pyruvate from D-glyceraldehyde 3-phosphate: step 4/5. In terms of biological role, catalyzes the reversible conversion of 2-phosphoglycerate (2-PG) into phosphoenolpyruvate (PEP). It is essential for the degradation of carbohydrates via glycolysis. The sequence is that of Enolase from Clostridium tetani (strain Massachusetts / E88).